The primary structure comprises 307 residues: Mitochondrial glycine transporter (307 aa).

Solcar repeat units lie at residues 8–87 (PRNS…MRSS), 115–199 (LTMY…SKQL), and 221–305 (TSTT…LVKR). 6 helical membrane-spanning segments follow: residues 14 to 39 (LIGG…TRIQ), 62 to 88 (GTLP…RSSL), 121 to 146 (LLTG…VRYE), 174 to 197 (GFGA…EKSK), 225 to 251 (VNTT…KTRM), and 280 to 298 (GLSM…AWGI).

The protein belongs to the mitochondrial carrier (TC 2.A.29) family. SLC25A38 subfamily.

It localises to the mitochondrion. The protein resides in the mitochondrion inner membrane. The enzyme catalyses glycine(in) = glycine(out). Its function is as follows. Mitochondrial glycine transporter that imports glycine into the mitochondrial matrix. Plays an important role in providing glycine for the first enzymatic step in heme biosynthesis, the condensation of glycine with succinyl-CoA to produce 5-aminolevulinate (ALA) in the mitochondrial matrix. This chain is Mitochondrial glycine transporter, found in Saccharomyces cerevisiae (strain ATCC 204508 / S288c) (Baker's yeast).